The following is a 724-amino-acid chain: Methionine--tRNA ligase (724 aa).

The 'HIGH' region motif lies at 11 to 21 (PYANGPIHAGH). Cysteine 143, cysteine 146, cysteine 156, and cysteine 159 together coordinate Zn(2+). Residues 344–348 (KFSTS) carry the 'KMSKS' region motif. Threonine 347 serves as a coordination point for ATP. One can recognise a tRNA-binding domain in the interval 624-724 (EFSKIDLRIG…KEVKLGAKVR (101 aa)).

This sequence belongs to the class-I aminoacyl-tRNA synthetase family. MetG type 1 subfamily. Homodimer. Zn(2+) serves as cofactor.

The protein localises to the cytoplasm. It catalyses the reaction tRNA(Met) + L-methionine + ATP = L-methionyl-tRNA(Met) + AMP + diphosphate. Its function is as follows. Is required not only for elongation of protein synthesis but also for the initiation of all mRNA translation through initiator tRNA(fMet) aminoacylation. The polypeptide is Methionine--tRNA ligase (Pyrococcus furiosus (strain ATCC 43587 / DSM 3638 / JCM 8422 / Vc1)).